Reading from the N-terminus, the 1060-residue chain is Histone lysine demethylase PHF8 (1060 aa).

The PHD-type zinc-finger motif lies at 41–92; that stretch reads PVYCLCRLPYDVTRFMIECDMCQDWFHGSCVGVEEEKAADIDLYHCPNCEVL. Ser-69 carries the post-translational modification Phosphoserine; by CDK1. A disordered region spans residues 100–120; the sequence is KRRGSSKGHDTHKGKPVKTGS. Residues 101–115 form a linker region; the sequence is RRGSSKGHDTHKGKP. The residue at position 120 (Ser-120) is a Phosphoserine; by CDK1. One can recognise a JmjC domain in the interval 231-387; it reads FSDTRLSNLV…MQLKAYEIEK (157 aa). Substrate is bound at residue Thr-280. Fe cation contacts are provided by His-283 and Asp-285. Lys-300 is a substrate binding site. His-355 contributes to the Fe cation binding site. Residues 508 to 517 are compositionally biased toward polar residues; sequence AHSTSVSMSR. The tract at residues 508–534 is disordered; that stretch reads AHSTSVSMSRLSLPSKNGSKKKGLKPK. Phosphoserine is present on Ser-651. Tyr-704 carries the phosphotyrosine modification. Residues Thr-705 and Thr-706 each carry the phosphothreonine modification. Ser-722 bears the Phosphoserine mark. 3 disordered regions span residues 768 to 840, 852 to 902, and 915 to 1046; these read QSSS…EQDS, YPSL…GTRV, and KLAQ…KQRL. 2 stretches are compositionally biased toward low complexity: residues 769–778 and 785–804; these read SSSSSPATSS and GGQD…VSNS. Phosphoserine is present on residues Ser-804, Ser-826, Ser-834, Ser-854, Ser-857, and Ser-880. The segment covering 826 to 839 has biased composition (acidic residues); it reads SEEEEENASLDEQD. The span at 891–900 shows a compositional bias: basic and acidic residues; sequence KQDRPVREGT. The span at 924–934 shows a compositional bias: basic residues; that stretch reads AQKKKYIKKKP. The span at 1018 to 1030 shows a compositional bias: polar residues; sequence RRPSVGSQSNQAG.

Belongs to the JHDM1 histone demethylase family. JHDM1D subfamily. In terms of assembly, interacts with POLR1B, UBTF, SETD1A, HCFC1, E2F1 and ZNF711. Interacts with ZNF263; recruited to the SIX3 promoter along with other proteins involved in chromatin modification and transcriptional corepression where it contributes to transcriptional repression. The cofactor is Fe(2+). Post-translationally, phosphorylation at Ser-69 and Ser-120 are required for dissociation from chromatin and accumulation of H4K20Me1 levels during prophase.

The protein localises to the nucleus. It is found in the nucleolus. The enzyme catalyses N(6),N(6)-dimethyl-L-lysyl(36)-[histone H3] + 2 2-oxoglutarate + 2 O2 = L-lysyl(36)-[histone H3] + 2 formaldehyde + 2 succinate + 2 CO2. It carries out the reaction N(6),N(6)-dimethyl-L-lysyl(9)-[histone H3] + 2 2-oxoglutarate + 2 O2 = L-lysyl(9)-[histone H3] + 2 formaldehyde + 2 succinate + 2 CO2. Functionally, histone lysine demethylase with selectivity for the di- and monomethyl states that plays a key role cell cycle progression, rDNA transcription and brain development. Demethylates mono- and dimethylated histone H3 'Lys-9' residue (H3K9Me1 and H3K9Me2), dimethylated H3 'Lys-27' (H3K27Me2) and monomethylated histone H4 'Lys-20' residue (H4K20Me1). Acts as a transcription activator as H3K9Me1, H3K9Me2, H3K27Me2 and H4K20Me1 are epigenetic repressive marks. Involved in cell cycle progression by being required to control G1-S transition. Acts as a coactivator of rDNA transcription, by activating polymerase I (pol I) mediated transcription of rRNA genes. Required for brain development, probably by regulating expression of neuron-specific genes. Only has activity toward H4K20Me1 when nucleosome is used as a substrate and when not histone octamer is used as substrate. May also have weak activity toward dimethylated H3 'Lys-36' (H3K36Me2), however, the relevance of this result remains unsure in vivo. Specifically binds trimethylated 'Lys-4' of histone H3 (H3K4me3), affecting histone demethylase specificity: has weak activity toward H3K9Me2 in absence of H3K4me3, while it has high activity toward H3K9me2 when binding H3K4me3. Positively modulates transcription of histone demethylase KDM5C, acting synergistically with transcription factor ARX; synergy may be related to enrichment of histone H3K4me3 in regulatory elements. This is Histone lysine demethylase PHF8 (PHF8) from Homo sapiens (Human).